The primary structure comprises 408 residues: Cell division protein FtsZ 2 (408 aa).

GTP contacts are provided by residues 130–132 (GTG), glutamate 169, arginine 173, and aspartate 216.

The protein belongs to the FtsZ family. In terms of assembly, homodimer. Polymerizes to form a dynamic ring structure in a strictly GTP-dependent manner. Interacts directly with several other division proteins.

Its subcellular location is the cytoplasm. In terms of biological role, essential cell division protein that forms a contractile ring structure (Z ring) at the future cell division site. The regulation of the ring assembly controls the timing and the location of cell division. One of the functions of the FtsZ ring is to recruit other cell division proteins to the septum to produce a new cell wall between the dividing cells. Binds GTP and shows GTPase activity. The polypeptide is Cell division protein FtsZ 2 (Pyrococcus furiosus (strain ATCC 43587 / DSM 3638 / JCM 8422 / Vc1)).